The following is an 808-amino-acid chain: LisH domain-containing protein ARMC9 (808 aa).

The region spanning 7–39 is the LisH domain; sequence YEADLLGLVKEFLNFGEFQETLETFTKECKTKG. Residues 196-230 adopt a coiled-coil conformation; it reads ITLYKESLHNNQELLQQLQQQLMETEHKARTYKKC. Disordered regions lie at residues 576 to 599, 650 to 709, and 742 to 808; these read FDES…DALE, PLQR…DYCV, and GMEK…SYRK. Acidic residues predominate over residues 579–599; it reads SIESDDEEEEKDDEEDEDALE. 3 stretches are compositionally biased toward polar residues: residues 655–668, 677–709, and 775–784; these read VTPS…TVRK, TNTF…DYCV, and IAPQFSQSGP. Residues 785-808 are compositionally biased toward low complexity; that stretch reads QQTSYSSSAGSSTRSRQSTQSYRK.

Its subcellular location is the cytoplasm. It is found in the cytoskeleton. The protein localises to the cilium basal body. It localises to the cell projection. The protein resides in the cilium. Its subcellular location is the microtubule organizing center. It is found in the centrosome. The protein localises to the centriole. In terms of biological role, involved in ciliogenesis. It is required for appropriate acetylation and polyglutamylation of ciliary microtubules, and regulation of cilium length. Acts as a positive regulator of hedgehog (Hh)signaling. This Xenopus tropicalis (Western clawed frog) protein is LisH domain-containing protein ARMC9 (armc9).